We begin with the raw amino-acid sequence, 192 residues long: Signal peptidase complex catalytic subunit sec11 (192 aa).

The Cytoplasmic portion of the chain corresponds to 1–18 (MLSFLSSNLSSTRQSLAQ). A helical; Signal-anchor for type II membrane protein transmembrane segment spans residues 19–39 (VLNFALVLSTAFMLWKGLSVF). At 40 to 192 (TASSSPIVVV…GLMVILQREQ (153 aa)) the chain is on the lumenal side. Catalysis depends on charge relay system residues S53, H92, and D133. The segment at 177–188 (VLLGIMGLMVIL) is C-terminal short (CTS) helix.

This sequence belongs to the peptidase S26B family. As to quaternary structure, component of the signal peptidase complex (SPC) composed of a catalytic subunit SEC11 and three accessory subunits SPC1, SPC2 and SPC3. The complex induces a local thinning of the ER membrane which is used to measure the length of the signal peptide (SP) h-region of protein substrates. This ensures the selectivity of the complex towards h-regions shorter than 18-20 amino acids. SPC associates with the translocon complex.

The protein localises to the endoplasmic reticulum membrane. It catalyses the reaction Cleavage of hydrophobic, N-terminal signal or leader sequences from secreted and periplasmic proteins.. Functionally, catalytic component of the signal peptidase complex (SPC) which catalyzes the cleavage of N-terminal signal sequences from nascent proteins as they are translocated into the lumen of the endoplasmic reticulum. Specifically cleaves N-terminal signal peptides that contain a hydrophobic alpha-helix (h-region) shorter than 18-20 amino acids. The chain is Signal peptidase complex catalytic subunit sec11 (sec11) from Neosartorya fischeri (strain ATCC 1020 / DSM 3700 / CBS 544.65 / FGSC A1164 / JCM 1740 / NRRL 181 / WB 181) (Aspergillus fischerianus).